Consider the following 334-residue polypeptide: MTKIGINGFGRIGRNVFRAALNNSEVEVVAINDLTDAKTLAHLLKYDTVHGTLNAEVSANENSIVVNGKEIKVIAERDPAQLPWSDYGVEVVVESTGRFTKKSDAEKHLGGSVKKVIISAPASDEDITVVMGVNHEQYDAANHNVVSNASCTTNCLAPFAKVLNEKFGVKRGMMTTIHSYTNDQQILDLPHKDLRRARAAAENMIPTSTGAAKAVALVLPELKGKLNGGAVRVPTANVSLVDLVVELDKEVTVEEVNAAFKAAAEGELKGILGYSEEPLVSIDYNGCTASSTIDALSTMVMEGNMVKVLSWYDNETGYSNRVVDLAAYMTSKGL.

Residues 11–12 (RI), Asp33, Arg77, and Ser119 each bind NAD(+). D-glyceraldehyde 3-phosphate is bound by residues 150-152 (SCT) and Thr181. The Nucleophile role is filled by Cys151. Residue Asn182 coordinates NAD(+). D-glyceraldehyde 3-phosphate-binding positions include Arg196, 209-210 (TG), and Arg232. Asn314 provides a ligand contact to NAD(+).

This sequence belongs to the glyceraldehyde-3-phosphate dehydrogenase family. Homotetramer.

The protein localises to the cytoplasm. The catalysed reaction is D-glyceraldehyde 3-phosphate + phosphate + NAD(+) = (2R)-3-phospho-glyceroyl phosphate + NADH + H(+). It participates in carbohydrate degradation; glycolysis; pyruvate from D-glyceraldehyde 3-phosphate: step 1/5. In terms of biological role, catalyzes the oxidative phosphorylation of glyceraldehyde 3-phosphate (G3P) to 1,3-bisphosphoglycerate (BPG) using the cofactor NAD. The first reaction step involves the formation of a hemiacetal intermediate between G3P and a cysteine residue, and this hemiacetal intermediate is then oxidized to a thioester, with concomitant reduction of NAD to NADH. The reduced NADH is then exchanged with the second NAD, and the thioester is attacked by a nucleophilic inorganic phosphate to produce BPG. This Bacillus cereus protein is Glyceraldehyde-3-phosphate dehydrogenase 1 (gap1).